A 482-amino-acid chain; its full sequence is Probable glycine dehydrogenase (decarboxylating) subunit 2 (482 aa).

Position 264 is an N6-(pyridoxal phosphate)lysine (lysine 264).

The protein belongs to the GcvP family. C-terminal subunit subfamily. The glycine cleavage system is composed of four proteins: P, T, L and H. In this organism, the P 'protein' is a heterodimer of two subunits. It depends on pyridoxal 5'-phosphate as a cofactor.

The catalysed reaction is N(6)-[(R)-lipoyl]-L-lysyl-[glycine-cleavage complex H protein] + glycine + H(+) = N(6)-[(R)-S(8)-aminomethyldihydrolipoyl]-L-lysyl-[glycine-cleavage complex H protein] + CO2. In terms of biological role, the glycine cleavage system catalyzes the degradation of glycine. The P protein binds the alpha-amino group of glycine through its pyridoxal phosphate cofactor; CO(2) is released and the remaining methylamine moiety is then transferred to the lipoamide cofactor of the H protein. This Treponema denticola (strain ATCC 35405 / DSM 14222 / CIP 103919 / JCM 8153 / KCTC 15104) protein is Probable glycine dehydrogenase (decarboxylating) subunit 2.